Here is a 230-residue protein sequence, read N- to C-terminus: MSTNSDLRVTLYTYFRSSCSARLRIALALRSISYTSVPINLLKGEQSSTKNTAVNPSATVPTLIIEHVDRSQSPITITQSLAALEYLDEAFPDNPNPLLPPISNPQQRALVRSLASIIACDIQPVTNLRILQRVAPFGVDRAAWSKDLIEAGFAAYEAIARDSAGVFSVGDTITMADVCLIPAVWGAERAGVNLGQYPTIKRVAEALEKENAVKEGHWRTQQDTPTEFRC.

One can recognise a GST N-terminal domain in the interval 7 to 95 (LRVTLYTYFR…YLDEAFPDNP (89 aa)). Glutathione-binding positions include 17-22 (SSCSAR), Gln46, Val60, 79-80 (QS), Gln123, and 127-129 (NLR). The GST C-terminal domain maps to 104–226 (NPQQRALVRS…HWRTQQDTPT (123 aa)).

This sequence belongs to the GST superfamily. Zeta family. Glutathione serves as cofactor.

The protein resides in the cytoplasm. The catalysed reaction is 4-maleylacetoacetate = 4-fumarylacetoacetate. It participates in amino-acid degradation; L-phenylalanine degradation; acetoacetate and fumarate from L-phenylalanine: step 5/6. This Emericella nidulans (strain FGSC A4 / ATCC 38163 / CBS 112.46 / NRRL 194 / M139) (Aspergillus nidulans) protein is Maleylacetoacetate isomerase (maiA).